Consider the following 192-residue polypeptide: Probable GTP-binding protein EngB (192 aa).

The region spanning 22 to 192 (GRPEIVFVGR…LLERLDLFSQ (171 aa)) is the EngB-type G domain. Residues 30–37 (GRSNVGKS), 57–61 (GKTRL), 75–78 (DLPG), 142–145 (TKWD), and 172–174 (YSS) contribute to the GTP site. Positions 37 and 59 each coordinate Mg(2+).

This sequence belongs to the TRAFAC class TrmE-Era-EngA-EngB-Septin-like GTPase superfamily. EngB GTPase family. It depends on Mg(2+) as a cofactor.

In terms of biological role, necessary for normal cell division and for the maintenance of normal septation. This Chlorobaculum parvum (strain DSM 263 / NCIMB 8327) (Chlorobium vibrioforme subsp. thiosulfatophilum) protein is Probable GTP-binding protein EngB.